The sequence spans 450 residues: Coiled-coil domain-containing protein 149-A (450 aa).

Coiled-coil stretches lie at residues 1–197 and 259–286; these read MANQ…DRRK and IQHQRQTNRILGNRVADLERKLKTLEIS. Residues 290-358 are disordered; that stretch reads SLPDDRTGRG…NGQVGTQLKE (69 aa). The span at 343–354 shows a compositional bias: polar residues; it reads PSGTRTNGQVGT.

The protein belongs to the CCDC149 family.

The chain is Coiled-coil domain-containing protein 149-A (ccdc149a) from Danio rerio (Zebrafish).